A 695-amino-acid polypeptide reads, in one-letter code: ATP-dependent DNA helicase II subunit 2 (695 aa).

The region spanning 229–461 is the Ku domain; sequence FSIGNRDSKD…IDFAVSNYID (233 aa).

It belongs to the ku80 family. In terms of assembly, heterodimer of pku70 and pku80.

Its subcellular location is the nucleus. The protein localises to the chromosome. The protein resides in the telomere. The catalysed reaction is ATP + H2O = ADP + phosphate + H(+). Functionally, single-stranded DNA-dependent ATP-dependent helicase. Involved in non-homologous end joining (NHEJ) DNA double strand break repair. DNA-binding is sequence-independent but has a high affinity to nicks in double-stranded DNA and to the ends of duplex DNA. Binds to naturally occurring chromosomal ends, and therefore provides chromosomal end protection. Required also for telomere recombination to repair telomeric ends in the absence of telomerase. ku70, of the ku70/ku80 heterodimer, binds to the stem loop of tlc1, the RNA component of telomerase. Involved in telomere maintenance. Interacts with telomeric repeats and subtelomeric sequences thereby controlling telomere length and protecting against subtelomeric rearrangement. Required for mating-type switching. This Schizosaccharomyces pombe (strain 972 / ATCC 24843) (Fission yeast) protein is ATP-dependent DNA helicase II subunit 2 (pku80).